Here is a 185-residue protein sequence, read N- to C-terminus: Ribonuclease M5 (185 aa).

The Toprim domain maps to lysine 3–glycine 84. Positions 9, 55, and 57 each coordinate Mg(2+).

Belongs to the ribonuclease M5 family. Mg(2+) serves as cofactor.

The protein resides in the cytoplasm. It catalyses the reaction Endonucleolytic cleavage of RNA, removing 21 and 42 nucleotides, respectively, from the 5'- and 3'-termini of a 5S-rRNA precursor.. Its function is as follows. Required for correct processing of both the 5' and 3' ends of 5S rRNA precursor. Cleaves both sides of a double-stranded region yielding mature 5S rRNA in one step. The chain is Ribonuclease M5 from Clostridium acetobutylicum (strain ATCC 824 / DSM 792 / JCM 1419 / IAM 19013 / LMG 5710 / NBRC 13948 / NRRL B-527 / VKM B-1787 / 2291 / W).